Here is a 636-residue protein sequence, read N- to C-terminus: Rik1-associated factor 2 (636 aa).

As to quaternary structure, component of the Clr4 methyltransferase complex (ClrC) composed of at least clr4, rik1, pcu4, rbx1, raf1 and raf2. The cullin pcu4, rik1, raf1, raf2 and the ring-box protein rbx1 are components of an E3 ubiquitin ligase, whose activity is essential for heterochromatin assembly. Interacts with pcu4.

Its subcellular location is the cytoplasm. The protein resides in the mitochondrion. It localises to the nucleus. The protein localises to the chromosome. Component of the Clr4 methyltransferase complex (ClrC) which contributes to the establishment of heterochromatin by specifically methylating histone H3 to form H3K9me. ClrC preferentially ubiquitylates H3K14 and ClrC-mediated H3 ubiquitination promotes clr4 methyltransferase activity for the methylation of H3K9. H3K9me represents a specific tag for epigenetic transcriptional repression by recruiting swi6/HP1 to methylated histones which leads to transcriptional silencing within centromeric heterochromatin, telomeric regions and at the silent mating-type loci. Has a role in both mitotic and meiotic chromosome segregation. This is Rik1-associated factor 2 (raf2) from Schizosaccharomyces pombe (strain 972 / ATCC 24843) (Fission yeast).